The primary structure comprises 545 residues: Chaperonin GroEL (545 aa).

Residues 30-33 (TLGP), lysine 51, 87-91 (DGTTT), glycine 415, and aspartate 495 contribute to the ATP site.

The protein belongs to the chaperonin (HSP60) family. Forms a cylinder of 14 subunits composed of two heptameric rings stacked back-to-back. Interacts with the co-chaperonin GroES.

Its subcellular location is the cytoplasm. It catalyses the reaction ATP + H2O + a folded polypeptide = ADP + phosphate + an unfolded polypeptide.. Its function is as follows. Together with its co-chaperonin GroES, plays an essential role in assisting protein folding. The GroEL-GroES system forms a nano-cage that allows encapsulation of the non-native substrate proteins and provides a physical environment optimized to promote and accelerate protein folding. This Shewanella sp. (strain W3-18-1) protein is Chaperonin GroEL.